The chain runs to 212 residues: Synaptosomal-associated protein 25 (212 aa).

T-SNARE coiled-coil homology domains lie at 26–88 (QGVA…LSGM) and 148–210 (DARE…AHQL).

This sequence belongs to the SNAP-25 family. Exclusively found in brain and ganglia.

The protein localises to the synapse. It is found in the synaptosome. In terms of biological role, may play an important role in the synaptic function of specific neuronal systems. Associates with proteins involved in vesicle docking and membrane fusion. This is Synaptosomal-associated protein 25 (Snap25) from Drosophila melanogaster (Fruit fly).